We begin with the raw amino-acid sequence, 429 residues long: Adenylosuccinate synthetase (429 aa).

Residues 12–18 (GDEGKGK) and 40–42 (GHT) each bind GTP. Catalysis depends on aspartate 13, which acts as the Proton acceptor. Residues aspartate 13 and glycine 40 each contribute to the Mg(2+) site. Residues 13 to 16 (DEGK), 38 to 41 (NAGH), threonine 128, arginine 142, glutamine 223, threonine 238, and arginine 302 each bind IMP. The active-site Proton donor is the histidine 41. 298–304 (TTTGRPR) lines the substrate pocket. Residues arginine 304, 330–332 (SID), and 412–414 (SVG) contribute to the GTP site.

This sequence belongs to the adenylosuccinate synthetase family. As to quaternary structure, homodimer. Requires Mg(2+) as cofactor.

It localises to the cytoplasm. It catalyses the reaction IMP + L-aspartate + GTP = N(6)-(1,2-dicarboxyethyl)-AMP + GDP + phosphate + 2 H(+). It functions in the pathway purine metabolism; AMP biosynthesis via de novo pathway; AMP from IMP: step 1/2. Plays an important role in the de novo pathway of purine nucleotide biosynthesis. Catalyzes the first committed step in the biosynthesis of AMP from IMP. This is Adenylosuccinate synthetase from Bacillus cereus (strain ZK / E33L).